A 208-amino-acid polypeptide reads, in one-letter code: Ras-related protein Rab6 (208 aa).

A GTP-binding site is contributed by 19–27; it reads GEQSVGKTS. Positions 41–49 match the Effector region motif; sequence YQATIGIDF. Residues 67–71, 125–128, and 155–157 each bind GTP; these read DTAGQ, NKTD, and SAK. The interval 176–208 is disordered; sequence MDSTENKPSEDMQEVVLKDSPNETKDPEGGCAC. The span at 179–208 shows a compositional bias: basic and acidic residues; that stretch reads TENKPSEDMQEVVLKDSPNETKDPEGGCAC.

The protein belongs to the small GTPase superfamily. Rab family. As to quaternary structure, interacts with Rich and Act5C. Interacts with BicD (via C-terminal domain). Interacts (in GTP-bound) with GCC1/CG10703 and cbs. Interacts with Gorab (via C-terminus); binds to a Gorab homodimer, this interaction seems to be required for trans-Golgi localization of Gorab. In terms of tissue distribution, expressed in larval eye, wing and leg imaginal disks and in salivary gland. Expressed in the larval optic lobe, showing an enrichment in the neuropil. In the adult brain, expressed in photoreceptors and mushroom body.

The protein localises to the golgi apparatus membrane. It is found in the synapse. The protein resides in the perikaryon. Its function is as follows. Protein transport. Regulator of membrane traffic from the Golgi apparatus towards the endoplasmic reticulum (ER). Mediates membrane trafficking during egg chamber growth and organization, possibly upstream of exocyst component Sec5. Also during oogenesis, plays a role, together with BicD but independently of Sec5, in the polarization of the oocyte microtubule cytoskeleton, in the localization of oskar mRNA and in the anterodorsal secretion of grk. Required for anterograde opsin transport through the ER-Golgi complex. Plays a role, together with Rich, in regulating CadN transport in photoreceptor cells which is required for the formation of normal synaptic connections between axons from the inner photoreceptor cells in the eye and postsynaptic cells in the brain medulla layer M6. Necessary for proper development of bristle shafts of macrochaete and microchaete on the head, thorax and scutellum. Modulates Notch signaling. As a key regulator of vesicular traffic, plays a critical role in the regulation of actin organization and is required for normal rates of phagocytic uptake during phagocytosis involved in defense against viral and fungal infection. This Drosophila melanogaster (Fruit fly) protein is Ras-related protein Rab6.